The following is a 337-amino-acid chain: Formamidase (337 aa).

The region spanning 14-257 (VVIGLVQLQL…DEIITAEVRP (244 aa)) is the CN hydrolase domain. Glutamate 60 functions as the Proton acceptor in the catalytic mechanism. The active-site Proton donor is the lysine 129. The active-site Nucleophile is cysteine 162.

This sequence belongs to the carbon-nitrogen hydrolase superfamily. Aliphatic amidase family.

It catalyses the reaction formamide + H2O = formate + NH4(+). Is an aliphatic amidase with a restricted substrate specificity, as it only hydrolyzes formamide. This chain is Formamidase, found in Bradyrhizobium sp. (strain ORS 278).